The primary structure comprises 611 residues: Putative type II restriction enzyme HgiDII (611 aa).

Positions 355-364 are enriched in basic and acidic residues; sequence YPSNPKKEEV. Residues 355 to 434 are disordered; that stretch reads YPSNPKKEEV…PEPSPPPKQE (80 aa). A compositionally biased stretch (low complexity) spans 381–409; the sequence is TNASSDSSTATENASSDSSTATENASSET. 2 tandem repeats follow at residues 382–392 and 393–403. The 2.5 X 11 AA tandem repeats stretch occupies residues 382–403; it reads NASSDSSTATENASSDSSTATE. A 3; truncated repeat occupies 404-409; that stretch reads NASSET. Positions 410-425 are enriched in acidic residues; that stretch reads NDGEVEDNSFFDDDIP.

The catalysed reaction is Endonucleolytic cleavage of DNA to give specific double-stranded fragments with terminal 5'-phosphates.. Its function is as follows. According to REBASE this is a P subtype restriction enzyme that recognizes the double-stranded sequence 5'-GTCGAC-3' and cleaves after G-1. No restriction activity was detected upon overexpressing this protein in E.coli. This Herpetosiphon aurantiacus (Herpetosiphon giganteus) protein is Putative type II restriction enzyme HgiDII.